We begin with the raw amino-acid sequence, 158 residues long: Transcription factor BTF3 homolog 4 (158 aa).

Residues 33–98 (TADDKKLQSS…AEVKQITEML (66 aa)) form the NAC-A/B domain. The tract at residues 123-158 (QVLDSKASKPEDIEEEDDDVPELVGNFDEASKNEAN) is disordered. The segment covering 134 to 143 (DIEEEDDDVP) has biased composition (acidic residues).

The protein belongs to the NAC-beta family.

This Xenopus laevis (African clawed frog) protein is Transcription factor BTF3 homolog 4 (btf3l4).